Here is an 80-residue protein sequence, read N- to C-terminus: UPF0248 protein MJ1316 (80 aa).

It belongs to the UPF0248 family.

The sequence is that of UPF0248 protein MJ1316 from Methanocaldococcus jannaschii (strain ATCC 43067 / DSM 2661 / JAL-1 / JCM 10045 / NBRC 100440) (Methanococcus jannaschii).